The primary structure comprises 496 residues: Endoglucanase (496 aa).

The signal sequence occupies residues 1–23 (MGYHSVFIAVFLWSSMVCHNGLA). D93 functions as the Nucleophile in the catalytic mechanism. Residues H415, D467, and E476 contribute to the active site.

The protein belongs to the glycosyl hydrolase 9 (cellulase E) family.

It carries out the reaction Endohydrolysis of (1-&gt;4)-beta-D-glucosidic linkages in cellulose, lichenin and cereal beta-D-glucans.. Its function is as follows. Involved in ripening fruit process. The chain is Endoglucanase from Phaseolus vulgaris (Kidney bean).